The primary structure comprises 125 residues: Large ribosomal subunit protein bL12 (125 aa).

Belongs to the bacterial ribosomal protein bL12 family. In terms of assembly, homodimer. Part of the ribosomal stalk of the 50S ribosomal subunit. Forms a multimeric L10(L12)X complex, where L10 forms an elongated spine to which 2 to 4 L12 dimers bind in a sequential fashion. Binds GTP-bound translation factors.

Functionally, forms part of the ribosomal stalk which helps the ribosome interact with GTP-bound translation factors. Is thus essential for accurate translation. The sequence is that of Large ribosomal subunit protein bL12 from Helicobacter pylori (strain ATCC 700392 / 26695) (Campylobacter pylori).